The primary structure comprises 84 residues: UPF0729 protein F18A11.3 (84 aa).

Residues Met1–Met21 traverse the membrane as a helical segment.

This sequence belongs to the UPF0729 family.

Its subcellular location is the cell membrane. The chain is UPF0729 protein F18A11.3 from Caenorhabditis elegans.